The sequence spans 57 residues: Small ribosomal subunit protein bS21 (57 aa).

Belongs to the bacterial ribosomal protein bS21 family.

This is Small ribosomal subunit protein bS21 from Geobacillus kaustophilus (strain HTA426).